We begin with the raw amino-acid sequence, 65 residues long: UPF0434 protein bsr0601 (65 aa).

Belongs to the UPF0434 family.

The protein is UPF0434 protein bsr0601 of Bradyrhizobium diazoefficiens (strain JCM 10833 / BCRC 13528 / IAM 13628 / NBRC 14792 / USDA 110).